We begin with the raw amino-acid sequence, 181 residues long: Large ribosomal subunit protein uL5 (181 aa).

It belongs to the universal ribosomal protein uL5 family. As to quaternary structure, part of the 50S ribosomal subunit; contacts the 5S rRNA and probably tRNA. Forms a bridge to the 30S subunit in the 70S ribosome.

In terms of biological role, this is one of the proteins that bind and probably mediate the attachment of the 5S RNA into the large ribosomal subunit, where it forms part of the central protuberance. In the 70S ribosome it contacts protein S13 of the 30S subunit (bridge B1b), connecting the 2 subunits; this bridge is implicated in subunit movement. May contact the P site tRNA; the 5S rRNA and some of its associated proteins might help stabilize positioning of ribosome-bound tRNAs. This is Large ribosomal subunit protein uL5 from Methanococcus maripaludis (strain C5 / ATCC BAA-1333).